A 382-amino-acid polypeptide reads, in one-letter code: tRNA-specific 2-thiouridylase MnmA (382 aa).

ATP is bound by residues 18-25 (AMSGGVDS) and leucine 44. Cysteine 112 acts as the Nucleophile in catalysis. Cysteine 112 and cysteine 209 are oxidised to a cystine. Glycine 136 contacts ATP. An interaction with tRNA region spans residues 159–161 (RDQ). The active-site Cysteine persulfide intermediate is cysteine 209.

This sequence belongs to the MnmA/TRMU family.

The protein localises to the cytoplasm. It catalyses the reaction S-sulfanyl-L-cysteinyl-[protein] + uridine(34) in tRNA + AH2 + ATP = 2-thiouridine(34) in tRNA + L-cysteinyl-[protein] + A + AMP + diphosphate + H(+). Its function is as follows. Catalyzes the 2-thiolation of uridine at the wobble position (U34) of tRNA, leading to the formation of s(2)U34. In Methylobacterium nodulans (strain LMG 21967 / CNCM I-2342 / ORS 2060), this protein is tRNA-specific 2-thiouridylase MnmA.